We begin with the raw amino-acid sequence, 292 residues long: uncharacterized protein (292 aa).

Residues 1–58 (MEWEQLEYFQTLARMQHVTKAAKSLSITQPALSRSIARLENHLGVPLFDRQGRSISLN) enclose the HTH lysR-type domain. The segment at residues 18-37 (VTKAAKSLSITQPALSRSIA) is a DNA-binding region (H-T-H motif).

Belongs to the LysR transcriptional regulatory family.

This is an uncharacterized protein from Bacillus subtilis (strain 168).